We begin with the raw amino-acid sequence, 116 residues long: Large ribosomal subunit protein uL18 (116 aa).

Belongs to the universal ribosomal protein uL18 family. As to quaternary structure, part of the 50S ribosomal subunit; part of the 5S rRNA/L5/L18/L25 subcomplex. Contacts the 5S and 23S rRNAs.

Its function is as follows. This is one of the proteins that bind and probably mediate the attachment of the 5S RNA into the large ribosomal subunit, where it forms part of the central protuberance. This Shewanella amazonensis (strain ATCC BAA-1098 / SB2B) protein is Large ribosomal subunit protein uL18.